Consider the following 542-residue polypeptide: Beta-amylase 2, chloroplastic (542 aa).

The transit peptide at 1-55 directs the protein to the chloroplast; sequence MAIRLNHSVIPVSVKLGAPTRVSARSSLPFSVGDWRGVSTFSGARPLVLAKVKLR. 3 residues coordinate substrate: aspartate 136, histidine 176, and aspartate 184. Glutamate 269 acts as the Proton donor in catalysis. Residues lysine 377, histidine 382, and threonine 424 each coordinate substrate. The active-site Proton acceptor is the glutamate 465. Residues 466–467 and arginine 501 contribute to the substrate site; that span reads NA.

The protein belongs to the glycosyl hydrolase 14 family.

The protein localises to the plastid. The protein resides in the chloroplast. The enzyme catalyses Hydrolysis of (1-&gt;4)-alpha-D-glucosidic linkages in polysaccharides so as to remove successive maltose units from the non-reducing ends of the chains.. With respect to regulation, redox regulation; active in reducing conditions, inactive in oxidizing conditions. Its function is as follows. Low beta-amylase activity. Interacts poorly with starch or other alpha-1,4-glucan. This chain is Beta-amylase 2, chloroplastic (BAM2), found in Arabidopsis thaliana (Mouse-ear cress).